Consider the following 699-residue polypeptide: Sarcoplasmic reticulum histidine-rich calcium-binding protein (699 aa).

An N-terminal signal peptide occupies residues Met1–Gln28. Residues Ser50 to Val95 form a disordered region. The span at Ala55–Glu89 shows a compositional bias: basic and acidic residues. Thr76 bears the Phosphothreonine; by FAM20C mark. Tandem repeats lie at residues His106–Glu121, His134–Ser154, His155–Ile177, His180–Ala213, His214–Ser237, His238–Ala270, His271–Ser294, His295–Ala318, His319–Asp342, and His343–Gly365. The interval His106–Asp342 is 6 X approximate tandem repeats. The tract at residues His106–Gly365 is 4 X tandem repeats, acidic. Ser119 and Ser145 each carry phosphoserine; by FAM20C. The segment at His127–Glu617 is disordered. Composition is skewed to basic residues over residues His148–His158 and His173–Arg183. Residues Gly187–Ser206 show a composition bias toward acidic residues. The span at His231 to Gln241 shows a compositional bias: basic residues. Residues Glu244–Ser263 show a composition bias toward acidic residues. A compositionally biased stretch (basic residues) spans His288–Arg298. Residues Glu302–Ser311 are compositionally biased toward acidic residues. The span at His324–Glu335 shows a compositional bias: basic and acidic residues. A Phosphoserine modification is found at Ser333. Residues His336–Gly347 show a composition bias toward basic residues. A phosphoserine; by FAM20C mark is found at Ser358 and Ser431. Composition is skewed to basic and acidic residues over residues Ser444–His463 and Val470–Asp481. At Ser494 the chain carries Phosphoserine; by FAM20C. Residues Gln504–Asp515 show a composition bias toward basic and acidic residues. 2 stretches are compositionally biased toward acidic residues: residues Gln532 to Arg551 and Ser567 to Glu581. Ser567 is modified (phosphoserine; by FAM20C). Residues Cys627–Cys673 form a metal-binding region.

This sequence belongs to the HRC family.

It localises to the sarcoplasmic reticulum lumen. Its function is as follows. May play a role in the regulation of calcium sequestration or release in the SR of skeletal and cardiac muscle. The sequence is that of Sarcoplasmic reticulum histidine-rich calcium-binding protein (HRC) from Homo sapiens (Human).